The primary structure comprises 209 residues: Imidazoleglycerol-phosphate dehydratase (209 aa).

The protein belongs to the imidazoleglycerol-phosphate dehydratase family.

The protein resides in the cytoplasm. It catalyses the reaction D-erythro-1-(imidazol-4-yl)glycerol 3-phosphate = 3-(imidazol-4-yl)-2-oxopropyl phosphate + H2O. The protein operates within amino-acid biosynthesis; L-histidine biosynthesis; L-histidine from 5-phospho-alpha-D-ribose 1-diphosphate: step 6/9. This Prochlorococcus marinus (strain MIT 9313) protein is Imidazoleglycerol-phosphate dehydratase.